We begin with the raw amino-acid sequence, 143 residues long: Transcription antitermination protein NusB (143 aa).

Belongs to the NusB family.

Functionally, involved in transcription antitermination. Required for transcription of ribosomal RNA (rRNA) genes. Binds specifically to the boxA antiterminator sequence of the ribosomal RNA (rrn) operons. This Dehalococcoides mccartyi (strain ATCC BAA-2266 / KCTC 15142 / 195) (Dehalococcoides ethenogenes (strain 195)) protein is Transcription antitermination protein NusB.